The following is a 402-amino-acid chain: 1-deoxy-D-xylulose 5-phosphate reductoisomerase (402 aa).

Residues Thr-25, Gly-26, Ser-27, Val-28, Arg-52, Asn-53, and Asn-136 each contribute to the NADPH site. Lys-137 contacts 1-deoxy-D-xylulose 5-phosphate. Glu-138 provides a ligand contact to NADPH. Mn(2+) is bound at residue Asp-162. 1-deoxy-D-xylulose 5-phosphate contacts are provided by Ser-163, Glu-164, Ser-188, and His-211. Glu-164 lines the Mn(2+) pocket. Residue Gly-217 coordinates NADPH. Residues Ser-224, Asn-229, Lys-230, and Glu-233 each contribute to the 1-deoxy-D-xylulose 5-phosphate site. Mn(2+) is bound at residue Glu-233.

The protein belongs to the DXR family. The cofactor is Mg(2+). Mn(2+) is required as a cofactor.

It catalyses the reaction 2-C-methyl-D-erythritol 4-phosphate + NADP(+) = 1-deoxy-D-xylulose 5-phosphate + NADPH + H(+). Its pathway is isoprenoid biosynthesis; isopentenyl diphosphate biosynthesis via DXP pathway; isopentenyl diphosphate from 1-deoxy-D-xylulose 5-phosphate: step 1/6. Catalyzes the NADPH-dependent rearrangement and reduction of 1-deoxy-D-xylulose-5-phosphate (DXP) to 2-C-methyl-D-erythritol 4-phosphate (MEP). The polypeptide is 1-deoxy-D-xylulose 5-phosphate reductoisomerase (Rhodospirillum centenum (strain ATCC 51521 / SW)).